The chain runs to 102 residues: Citrate lyase acyl carrier protein (102 aa).

The residue at position 14 (Ser-14) is an O-(phosphoribosyl dephospho-coenzyme A)serine.

The protein belongs to the CitD family. As to quaternary structure, oligomer with a subunit composition of (alpha,beta,gamma)6.

It is found in the cytoplasm. Functionally, covalent carrier of the coenzyme of citrate lyase. In Streptococcus pyogenes serotype M2 (strain MGAS10270), this protein is Citrate lyase acyl carrier protein.